A 634-amino-acid polypeptide reads, in one-letter code: Growth hormone receptor (634 aa).

A signal peptide spans 1 to 18; that stretch reads MDLWQLLLTLAVAGSSDA. Over 19–260 the chain is Extracellular; it reads FSGSEATPAF…NPSACEEDFQ (242 aa). N-linked (GlcNAc...) asparagine glycosylation occurs at N46. C56 and C66 are joined by a disulfide. N73 carries N-linked (GlcNAc...) asparagine glycosylation. Residues C97 and C108 are joined by a disulfide bond. N111 is a glycosylation site (N-linked (GlcNAc...) asparagine). Cysteines 122 and 136 form a disulfide. Residues 147-250 form the Fibronectin type-III domain; that stretch reads PPVGLNWTLL…EVLLITFPQM (104 aa). Residues N152, N157, and N196 are each glycosylated (N-linked (GlcNAc...) asparagine). The short motif at 236–240 is the WSXWS motif element; sequence YGKFS. Residues 261-284 form a helical membrane-spanning segment; the sequence is FPWFLIIMFGILGLAVTLFLLIFS. The Cytoplasmic portion of the chain corresponds to 285-634; the sequence is KQQRIKMLIL…STDQLNKIMP (350 aa). The interval 290-375 is required for JAK2 binding; sequence KMLILPPVPV…HEKSLNIFGA (86 aa). Residues 293–301 carry the Box 1 motif motif; that stretch reads ILPPVPVPK. Positions 336-345 match the UbE motif motif; sequence DSWVEFIELD. S337 carries the phosphoserine modification. Y483 and Y591 each carry phosphotyrosine.

Belongs to the type I cytokine receptor family. Type 1 subfamily. As to quaternary structure, on growth hormone (GH) binding, forms homodimers and binds JAK2 via a box 1-containing domain. In terms of processing, the soluble form (GHBP) is produced by phorbol ester-promoted proteolytic cleavage at the cell surface (shedding) by ADAM17/TACE. Shedding is inhibited by growth hormone (GH) binding to the receptor probably due to a conformational change in GHR rendering the receptor inaccessible to ADAM17. On GH binding, phosphorylated on tyrosine residues in the cytoplasmic domain by JAK2. Post-translationally, ubiquitinated by the ECS(SOCS2) complex following ligand-binding and phosphorylation by JAK2, leading to its degradation by the proteasome. Regulation by the ECS(SOCS2) complex acts as a negative feedback loop of growth hormone receptor signaling. Ubiquitination is not sufficient for GHR internalization.

The protein resides in the cell membrane. It is found in the secreted. In terms of biological role, receptor for pituitary gland growth hormone (GH1) involved in regulating postnatal body growth. On ligand binding, couples to the JAK2/STAT5 pathway. Functionally, the soluble form (GHBP) acts as a reservoir of growth hormone in plasma and may be a modulator/inhibitor of GH signaling. This is Growth hormone receptor (GHR) from Bos indicus (Zebu).